The following is a 308-amino-acid chain: Tryptophan 2,3-dioxygenase (308 aa).

A disordered region spans residues 1-35 (MQPPGDNAPAGCPFSGAHAAQPAHEAPHVPGDAAG). A compositionally biased stretch (low complexity) spans 17-30 (AHAAQPAHEAPHVP). Substrate contacts are provided by residues 77–81 (FIIQH), Tyr139, and Arg143. His266 provides a ligand contact to heme. Residue Thr280 coordinates substrate.

The protein belongs to the tryptophan 2,3-dioxygenase family. In terms of assembly, homotetramer. It depends on heme as a cofactor.

The catalysed reaction is L-tryptophan + O2 = N-formyl-L-kynurenine. It functions in the pathway amino-acid degradation; L-tryptophan degradation via kynurenine pathway; L-kynurenine from L-tryptophan: step 1/2. Its function is as follows. Heme-dependent dioxygenase that catalyzes the oxidative cleavage of the L-tryptophan (L-Trp) pyrrole ring and converts L-tryptophan to N-formyl-L-kynurenine. Catalyzes the oxidative cleavage of the indole moiety. In Burkholderia ambifaria (strain ATCC BAA-244 / DSM 16087 / CCUG 44356 / LMG 19182 / AMMD) (Burkholderia cepacia (strain AMMD)), this protein is Tryptophan 2,3-dioxygenase.